Here is an 879-residue protein sequence, read N- to C-terminus: Alanine--tRNA ligase (879 aa).

Zn(2+)-binding residues include histidine 566, histidine 570, cysteine 668, and histidine 672.

Belongs to the class-II aminoacyl-tRNA synthetase family. Zn(2+) is required as a cofactor.

It is found in the cytoplasm. It carries out the reaction tRNA(Ala) + L-alanine + ATP = L-alanyl-tRNA(Ala) + AMP + diphosphate. Catalyzes the attachment of alanine to tRNA(Ala) in a two-step reaction: alanine is first activated by ATP to form Ala-AMP and then transferred to the acceptor end of tRNA(Ala). Also edits incorrectly charged Ser-tRNA(Ala) and Gly-tRNA(Ala) via its editing domain. This is Alanine--tRNA ligase from Clostridium novyi (strain NT).